Here is a 63-residue protein sequence, read N- to C-terminus: Odorranain-B1 (63 aa).

A signal peptide spans 1–22; that stretch reads MFTTKKPLLLLFFLGIISLSVC. The propeptide occupies 23–41; the sequence is EQERDADEEDGGEVTEEEV.

Belongs to the frog skin active peptide (FSAP) family. Brevinin subfamily. Expressed by the skin glands.

The protein localises to the secreted. This chain is Odorranain-B1, found in Odorrana hainanensis (Odor frog).